Here is a 710-residue protein sequence, read N- to C-terminus: Aminopeptidase P2 (710 aa).

The N-terminal 79 residues, 1-79 (MIPLTLSSPS…IRKAQTKVVV (79 aa)), are a transit peptide targeting the chloroplast. A peptide-binding residues include R147 and H486. Mn(2+) is bound by residues D506, D517, and H580. Positions 580, 589, and 614 each coordinate a peptide. 2 residues coordinate Mn(2+): E614 and E628.

It belongs to the peptidase M24B family. Homodimer. Mn(2+) is required as a cofactor.

The protein resides in the plastid. It is found in the chloroplast. The enzyme catalyses Release of any N-terminal amino acid, including proline, that is linked to proline, even from a dipeptide or tripeptide.. Its function is as follows. Catalyzes the removal of a penultimate prolyl residue from the N-termini of peptides, such as Arg-Pro-Pro. The polypeptide is Aminopeptidase P2 (Arabidopsis thaliana (Mouse-ear cress)).